The primary structure comprises 371 residues: MLKGGAVWALGTMSGTSLDGVDAAMVLTDGERILEFGETRYRAYSEAERAVLRAALGRWPGEAAVAEAAEVVEAAHAELLAAFRGAEIVGFHGQTLAHEPGGRGTHQAGSGERLAQALGVPVVWDFRSADVAAGGQGAPLAPFYHFACARRAGADRPVAFLNLGGVGNLTWVDPRQAAPEAPGACLAFDTGPANAPINDLMQARLGRSHDEGGRLAAEGEVAEAVLARFLDHAFFARMPPKSLDRDAFADLLPAVADLSDADAAATLTAAAAAAVARGAAHFPTPVRQLLVTGGGRHNPVLMAMLEARTGIEVVPVEQAGLDGDMLEAQAFAYLAVRVARGLPTSAPSTTGVPACLGGGRMSRPEALALQP.

Position 15-22 (15-22) interacts with ATP; it reads GTSLDGVD.

This sequence belongs to the anhydro-N-acetylmuramic acid kinase family.

It carries out the reaction 1,6-anhydro-N-acetyl-beta-muramate + ATP + H2O = N-acetyl-D-muramate 6-phosphate + ADP + H(+). It functions in the pathway amino-sugar metabolism; 1,6-anhydro-N-acetylmuramate degradation. It participates in cell wall biogenesis; peptidoglycan recycling. Catalyzes the specific phosphorylation of 1,6-anhydro-N-acetylmuramic acid (anhMurNAc) with the simultaneous cleavage of the 1,6-anhydro ring, generating MurNAc-6-P. Is required for the utilization of anhMurNAc either imported from the medium or derived from its own cell wall murein, and thus plays a role in cell wall recycling. The sequence is that of Anhydro-N-acetylmuramic acid kinase from Cereibacter sphaeroides (strain ATCC 17023 / DSM 158 / JCM 6121 / CCUG 31486 / LMG 2827 / NBRC 12203 / NCIMB 8253 / ATH 2.4.1.) (Rhodobacter sphaeroides).